Here is a 757-residue protein sequence, read N- to C-terminus: UDP-N-acetylmuramoyl-L-alanyl-D-glutamate--2,6-diaminopimelate ligase MurE homolog, chloroplastic (757 aa).

Over residues Met1–Pro11 the composition is skewed to low complexity. The transit peptide at Met1–Glu53 directs the protein to the chloroplast. Disordered regions lie at residues Met1–Phe112, Phe126–Leu152, and Val172–Gly195. Over residues Phe12 to Arg30 the composition is skewed to pro residues. Acidic residues-rich tracts occupy residues Ala47–Glu56 and Pro142–Leu152.

The protein belongs to the MurCDEF family. MurE subfamily. In terms of assembly, component of the plastid-encoded plastid RNA polymerase (PEP) complex.

The protein resides in the plastid. Its subcellular location is the chloroplast. Required for the activity of the plastid-encoded RNA polymerase (PEP) and full expression of genes transcribed by PEP. In Oryza sativa subsp. japonica (Rice), this protein is UDP-N-acetylmuramoyl-L-alanyl-D-glutamate--2,6-diaminopimelate ligase MurE homolog, chloroplastic.